The sequence spans 317 residues: Putative S-adenosyl-L-methionine-dependent methyltransferase MSMEG_0093 (317 aa).

S-adenosyl-L-methionine-binding positions include Asp134 and 163–164 (DL).

Belongs to the UPF0677 family.

Exhibits S-adenosyl-L-methionine-dependent methyltransferase activity. The polypeptide is Putative S-adenosyl-L-methionine-dependent methyltransferase MSMEG_0093 (Mycolicibacterium smegmatis (strain ATCC 700084 / mc(2)155) (Mycobacterium smegmatis)).